Reading from the N-terminus, the 162-residue chain is Lipoprotein signal peptidase (162 aa).

The next 4 helical transmembrane spans lie at 12 to 32 (WFALAALVIVLDQISKLYFNS), 42 to 62 (VVEGFFNFTLVYNPGAAFSFL), 66 to 86 (GGWQKYLFTILAFAVSGWLGW), and 93 to 113 (FSGLMNLAAAFIMGGALGNVI). Active-site residues include D123 and D142. A helical membrane pass occupies residues 133–153 (WYYPAFNLADSFICVGAALMV).

This sequence belongs to the peptidase A8 family.

It is found in the cell inner membrane. It carries out the reaction Release of signal peptides from bacterial membrane prolipoproteins. Hydrolyzes -Xaa-Yaa-Zaa-|-(S,diacylglyceryl)Cys-, in which Xaa is hydrophobic (preferably Leu), and Yaa (Ala or Ser) and Zaa (Gly or Ala) have small, neutral side chains.. The protein operates within protein modification; lipoprotein biosynthesis (signal peptide cleavage). Its function is as follows. This protein specifically catalyzes the removal of signal peptides from prolipoproteins. The polypeptide is Lipoprotein signal peptidase (Chromobacterium violaceum (strain ATCC 12472 / DSM 30191 / JCM 1249 / CCUG 213 / NBRC 12614 / NCIMB 9131 / NCTC 9757 / MK)).